A 367-amino-acid polypeptide reads, in one-letter code: Probable butyrate kinase (367 aa).

This sequence belongs to the acetokinase family.

The protein resides in the cytoplasm. It carries out the reaction butanoate + ATP = butanoyl phosphate + ADP. The sequence is that of Probable butyrate kinase from Bacillus cereus (strain ATCC 14579 / DSM 31 / CCUG 7414 / JCM 2152 / NBRC 15305 / NCIMB 9373 / NCTC 2599 / NRRL B-3711).